Reading from the N-terminus, the 95-residue chain is Large ribosomal subunit protein uL23 (95 aa).

This sequence belongs to the universal ribosomal protein uL23 family. In terms of assembly, part of the 50S ribosomal subunit. Contacts protein L29, and trigger factor when it is bound to the ribosome.

Its function is as follows. One of the early assembly proteins it binds 23S rRNA. One of the proteins that surrounds the polypeptide exit tunnel on the outside of the ribosome. Forms the main docking site for trigger factor binding to the ribosome. The protein is Large ribosomal subunit protein uL23 of Desulforapulum autotrophicum (strain ATCC 43914 / DSM 3382 / VKM B-1955 / HRM2) (Desulfobacterium autotrophicum).